The primary structure comprises 538 residues: ATP synthase subunit alpha, mitochondrial (538 aa).

Position 197-204 (197-204) interacts with ATP; the sequence is GDRQTGKT. The tract at residues 228–248 is essential and sufficient for enterobactin binding; the sequence is FCIYVAVGQKRSTVAQIVKRL.

The protein belongs to the ATPase alpha/beta chains family. In terms of assembly, subunit of the F-type ATPase which has 2 components, CF(1) - the catalytic core - and CF(0) - the membrane proton channel. As to expression, ubiquitous (at protein level).

It localises to the mitochondrion. Its subcellular location is the mitochondrion inner membrane. Mitochondrial membrane ATP synthase (F(1)F(0) ATP synthase or Complex V) produces ATP from ADP in the presence of a proton gradient across the membrane which is generated by electron transport complexes of the respiratory chain. F-type ATPases consist of two structural domains, F(1) - containing the extramembraneous catalytic core, and F(0) - containing the membrane proton channel, linked together by a central stalk and a peripheral stalk. During catalysis, ATP synthesis in the catalytic domain of F(1) is coupled via a rotary mechanism of the central stalk subunits to proton translocation. Subunits alpha and beta form the catalytic core in F(1). Rotation of the central stalk against the surrounding subunits leads to hydrolysis of ATP in three separate catalytic sites on the beta subunits. Subunit alpha does not bear the catalytic high-affinity ATP-binding sites. Binds the bacterial siderophore enterobactin and is required for the assimilation of enterobactin-bound iron from non-pathogenic bacteria. Promotes mitochondrial accumulation of enterobactin-derived iron ions. In Caenorhabditis elegans, this protein is ATP synthase subunit alpha, mitochondrial.